An 880-amino-acid chain; its full sequence is GRB2-associated and regulator of MAPK protein 2 (880 aa).

The CABIT stretch occupies residues R12 to R320. 5 disordered regions span residues P385 to S407, I461 to V483, S527 to S548, S569 to P611, and A633 to Q713. 2 stretches are compositionally biased toward low complexity: residues P640–G663 and Q683–S696. S740 is subject to Phosphoserine. The 65-residue stretch at S813–R877 folds into the SAM domain.

It belongs to the GAREM family.

Functionally, probable adapter protein that provides a critical link between cell surface epidermal growth factor receptor and the MAPK/ERK signaling pathway. This chain is GRB2-associated and regulator of MAPK protein 2 (Garem2), found in Mus musculus (Mouse).